A 90-amino-acid polypeptide reads, in one-letter code: Sec-independent protein translocase protein TatA (90 aa).

The helical transmembrane segment at 2–22 (GVGGISIWQLLIVLVIILLLF) threads the bilayer. Composition is skewed to basic and acidic residues over residues 45-68 (LRDEERRDAEEAATIEHKQAHKAE) and 76-90 (ADADFKIKSGNDEHK). A disordered region spans residues 45 to 90 (LRDEERRDAEEAATIEHKQAHKAENPSQRQQADADFKIKSGNDEHK).

It belongs to the TatA/E family. In terms of assembly, the Tat system comprises two distinct complexes: a TatABC complex, containing multiple copies of TatA, TatB and TatC subunits, and a separate TatA complex, containing only TatA subunits. Substrates initially bind to the TatABC complex, which probably triggers association of the separate TatA complex to form the active translocon.

The protein resides in the cell inner membrane. Functionally, part of the twin-arginine translocation (Tat) system that transports large folded proteins containing a characteristic twin-arginine motif in their signal peptide across membranes. TatA could form the protein-conducting channel of the Tat system. This chain is Sec-independent protein translocase protein TatA, found in Nitrosococcus oceani (strain ATCC 19707 / BCRC 17464 / JCM 30415 / NCIMB 11848 / C-107).